A 129-amino-acid polypeptide reads, in one-letter code: Small ribosomal subunit protein uS11 (129 aa).

It belongs to the universal ribosomal protein uS11 family. Part of the 30S ribosomal subunit. Interacts with proteins S7 and S18. Binds to IF-3.

In terms of biological role, located on the platform of the 30S subunit, it bridges several disparate RNA helices of the 16S rRNA. Forms part of the Shine-Dalgarno cleft in the 70S ribosome. The protein is Small ribosomal subunit protein uS11 of Rhodopseudomonas palustris (strain HaA2).